Consider the following 949-residue polypeptide: Protocadherin alpha-11 (949 aa).

The N-terminal stretch at Met1–Gly29 is a signal peptide. 6 Cadherin domains span residues Gln30–Phe133, Ala157–Phe242, Asp243–Val349, Ala350–Phe454, Ala455–Leu564, and Val580–Ala677. The Extracellular portion of the chain corresponds to Gln30–Asn696. 2 N-linked (GlcNAc...) asparagine glycosylation sites follow: Asn265 and Asn304. Asn547 is a glycosylation site (N-linked (GlcNAc...) asparagine). Residues Val697–Tyr717 traverse the membrane as a helical segment. The Cytoplasmic portion of the chain corresponds to Thr718–Gln949. PXXP repeat units lie at residues Pro733 to Pro736 and Pro773 to Pro776. A 6 X 4 AA repeats of P-X-X-P region spans residues Pro733–Pro893. Disordered stretches follow at residues Arg753 to Tyr807, Ile826 to Gly858, and Tyr870 to Ile889. Residues Asn780–Glu789 are compositionally biased toward basic and acidic residues. PXXP repeat units follow at residues Pro795 to Pro798, Pro831 to Pro834, Pro872 to Pro875, and Pro890 to Pro893. The tract at residues Gln900–Gln949 is disordered. The span at Asp908–Lys922 shows a compositional bias: basic and acidic residues.

Its subcellular location is the cell membrane. Its function is as follows. Potential calcium-dependent cell-adhesion protein. May be involved in the establishment and maintenance of specific neuronal connections in the brain. The polypeptide is Protocadherin alpha-11 (PCDHA11) (Pan troglodytes (Chimpanzee)).